Here is a 126-residue protein sequence, read N- to C-terminus: Glycine cleavage system H protein (126 aa).

One can recognise a Lipoyl-binding domain in the interval 22-104; it reads TVTIGITEYA…YEKAWMVKVE (83 aa). Lysine 63 is subject to N6-lipoyllysine.

This sequence belongs to the GcvH family. The glycine cleavage system is composed of four proteins: P, T, L and H. (R)-lipoate is required as a cofactor.

The glycine cleavage system catalyzes the degradation of glycine. The H protein shuttles the methylamine group of glycine from the P protein to the T protein. Its function is as follows. Is also involved in protein lipoylation via its role as an octanoyl/lipoyl carrier protein intermediate. This is Glycine cleavage system H protein from Staphylococcus haemolyticus (strain JCSC1435).